Consider the following 196-residue polypeptide: Imidazoleglycerol-phosphate dehydratase (196 aa).

This sequence belongs to the imidazoleglycerol-phosphate dehydratase family.

It is found in the cytoplasm. The catalysed reaction is D-erythro-1-(imidazol-4-yl)glycerol 3-phosphate = 3-(imidazol-4-yl)-2-oxopropyl phosphate + H2O. It functions in the pathway amino-acid biosynthesis; L-histidine biosynthesis; L-histidine from 5-phospho-alpha-D-ribose 1-diphosphate: step 6/9. This is Imidazoleglycerol-phosphate dehydratase from Dehalococcoides mccartyi (strain ATCC BAA-2266 / KCTC 15142 / 195) (Dehalococcoides ethenogenes (strain 195)).